A 96-amino-acid polypeptide reads, in one-letter code: DNA-directed RNA polymerase subunit Rpo11 (96 aa).

Belongs to the archaeal Rpo11/eukaryotic RPB11/RPC19 RNA polymerase subunit family. As to quaternary structure, part of the RNA polymerase complex.

Its subcellular location is the cytoplasm. The catalysed reaction is RNA(n) + a ribonucleoside 5'-triphosphate = RNA(n+1) + diphosphate. DNA-dependent RNA polymerase (RNAP) catalyzes the transcription of DNA into RNA using the four ribonucleoside triphosphates as substrates. The chain is DNA-directed RNA polymerase subunit Rpo11 from Nanoarchaeum equitans (strain Kin4-M).